The primary structure comprises 366 residues: PTI1-like tyrosine-protein kinase 2 (366 aa).

A compositionally biased stretch (basic and acidic residues) spans G8 to L23. The disordered stretch occupies residues G8–E50. Over residues P26–P39 the composition is skewed to polar residues. The region spanning F71–L353 is the Protein kinase domain. Residues I77–V85 and K99 contribute to the ATP site. D203 serves as the catalytic Proton acceptor.

It belongs to the protein kinase superfamily. Tyr protein kinase family. As to quaternary structure, interacts with OXI1. In terms of processing, autophosphorylated and phosphorylated by OXI1.

It carries out the reaction L-tyrosyl-[protein] + ATP = O-phospho-L-tyrosyl-[protein] + ADP + H(+). Strongly activated in response to phosphatidic acid (PA) and xylanase in a OXI1- and PDK1-dependent manner, and, to a lesser extent, by hydrogen peroxide and flagellin in a OXI1-dependent manner. Functionally, probable tyrosine-protein kinase involved in oxidative burst-mediated signaling leading to specific genes expression. This chain is PTI1-like tyrosine-protein kinase 2 (PTI12), found in Arabidopsis thaliana (Mouse-ear cress).